The following is a 675-amino-acid chain: MKAYKPPVVNKFGVISSTYHEELLKSIFESSNRRKSQKPKPSFSISKEFILRFNHTDNPAEEEELLEQARRLIVRSKRKLGLKTLGSGKHVHLPTAWAEVIYLAQCKGEIQDEALNMLHASLDHVSFDHDQLPALFFLAESVLYRLCCDAFMKGYLYSVEIKLVKIGYLIFLRLFVFFLHGHLESFKQHLLRLQPYLYALHFSEPSYYKYPNIISNVQFILKTSEIICKRELHSEPFVESPDETEDPYSDLNHLQLNKRGYEVNHLLWHSVAAWSCVQNNRPQLTEVLEHLLFYKTQLQTKCWLDSALALMVLGEAAKLDMACLKTLMDLVTDFLENILSAQNQEENYNIYDTSWASEIVFTYTTIIAEVCLYAATSDLRKTALIGFCACKSPQQGISLTDKSEELPELDGASILTLLKYFSSRISDNCEKVIWIGYYGIVYNLVKMSWELQGEQDQDGLRNMIWQTLQKIKDYEQDPRIRCALVIAQAELNGPSDPFCTKATPNSGEEVFSKYIGWRIATTLSRLFFPSLDVAPPKTPVEVDLPRKHTIRERQPAKKRVLRFILKDHSSVVEVSMTPYPNFFTKADKKLEEIIDHHWQKDMEARKREEEAYKAQNQKDKEEKEKIHFQEIMKQRERKLNKQTKPYEIILSEKESGSEKKCGFFELKPSTAPNAK.

The helical transmembrane segment at 163 to 183 threads the bilayer; that stretch reads LVKIGYLIFLRLFVFFLHGHL. Positions 598–634 form a coiled coil; the sequence is WQKDMEARKREEEAYKAQNQKDKEEKEKIHFQEIMKQ. Residues 605–624 form a disordered region; that stretch reads RKREEEAYKAQNQKDKEEKE.

In terms of tissue distribution, high expression in the testis and weak expression levels in the spleen, liver, brain, uterus, lung, epididymis and kidney. Not detected in the heart or ovary.

It localises to the membrane. Plays a critical role for male fertility and sperm motility by regulating sperm cytoplasm removal and maintaining axoneme integrity. In Mus musculus (Mouse), this protein is Transmembrane protein 232 (Tmem232).